The primary structure comprises 80 residues: Serine palmitoyltransferase small subunit A-B (80 aa).

The Cytoplasmic portion of the chain corresponds to 1 to 21 (MKVSCEDVNGPRSSLGRAWNH). The helical transmembrane segment at 22-38 (VSWLYYQYLLVTALYML) threads the bilayer. Over 39–43 (EPWER) the chain is Lumenal. Residues 44-66 (TVFNSMLVSIVGMALYTGYIFMP) form a helical membrane-spanning segment. At 67–80 (QHILAILHYFEIVQ) the chain is on the cytoplasmic side.

It belongs to the SPTSS family. SPTSSA subfamily. Component of the serine palmitoyltransferase (SPT) complex, which is composed of SPTLC1, SPTLC2 or SPTLC3 and SPTSSA or SPTSSB. The heterodimer consisting of SPTLC1 and SPTLC2/SPTLC3 forms the catalytic core of the enzyme, while SPTSSA or SPTSSB subunits determine substrate specificity. SPT also interacts with ORMDL proteins, especially ORMDL3, which negatively regulate SPT activity in the presence of ceramides.

Its subcellular location is the endoplasmic reticulum membrane. The protein operates within lipid metabolism; sphingolipid metabolism. Its function is as follows. Component of the serine palmitoyltransferase multisubunit enzyme (SPT) that catalyzes the initial and rate-limiting step in sphingolipid biosynthesis by condensing L-serine and activated acyl-CoA (most commonly palmitoyl-CoA) to form long-chain bases. The SPT complex is composed of SPTLC1, SPTLC2 or SPTLC3 and SPTSSA or SPTSSB. Within this complex, the heterodimer consisting of SPTLC1 and SPTLC2/SPTLC3 forms the catalytic core. Within the SPT complex, SPTSSA stimulates the catalytic activity and plays a role in substrate specificity, which depends upon the overall complex composition. The SPTLC1-SPTLC2-SPTSSA complex shows a strong preference for C16-CoA substrate, while the SPTLC1-SPTLC3-SPTSSA isozyme uses both C14-CoA and C16-CoA as substrates, with a slight preference for C14-CoA. Independently of its action as a SPT component, may be involved in MBOAT7 localization to mitochondria-associated membranes, a membrane bridge between the endoplasmic reticulum and mitochondria, may hence affect MBOAT7-catalyzed incorporation of arachidonic acid into phosphatidylinositol. In Xenopus laevis (African clawed frog), this protein is Serine palmitoyltransferase small subunit A-B (sptssa-b).